Consider the following 184-residue polypeptide: dITP/XTP pyrophosphatase (184 aa).

8 to 13 (TGNKGK) contributes to the substrate binding site. 2 residues coordinate Mg(2+): glutamate 37 and aspartate 66. Aspartate 66 serves as the catalytic Proton acceptor. Substrate is bound by residues serine 67, 142 to 145 (FGYD), lysine 163, and 168 to 169 (HR).

This sequence belongs to the HAM1 NTPase family. Homodimer. Mg(2+) is required as a cofactor.

The enzyme catalyses XTP + H2O = XMP + diphosphate + H(+). It carries out the reaction dITP + H2O = dIMP + diphosphate + H(+). The catalysed reaction is ITP + H2O = IMP + diphosphate + H(+). Pyrophosphatase that catalyzes the hydrolysis of nucleoside triphosphates to their monophosphate derivatives, with a high preference for the non-canonical purine nucleotides XTP (xanthosine triphosphate), dITP (deoxyinosine triphosphate) and ITP. Seems to function as a house-cleaning enzyme that removes non-canonical purine nucleotides from the nucleotide pool, thus preventing their incorporation into DNA/RNA and avoiding chromosomal lesions. The chain is dITP/XTP pyrophosphatase from Methanosarcina acetivorans (strain ATCC 35395 / DSM 2834 / JCM 12185 / C2A).